The primary structure comprises 146 residues: Hemoglobin subunit beta (146 aa).

Val-1 carries the N-acetylvaline modification. Residues 2 to 146 enclose the Globin domain; that stretch reads HLTPEEKNAV…VANALAHKYH (145 aa). Thr-12 carries the phosphothreonine modification. Position 44 is a phosphoserine (Ser-44). Lys-59 is modified (N6-acetyllysine). A heme b-binding site is contributed by His-63. At Lys-82 the chain carries N6-acetyllysine. His-92 is a heme b binding site. Residue Cys-93 is modified to S-nitrosocysteine. Residue Lys-144 is modified to N6-acetyllysine.

Belongs to the globin family. Heterotetramer of two alpha chains and two beta chains. In terms of tissue distribution, red blood cells.

Its function is as follows. Involved in oxygen transport from the lung to the various peripheral tissues. This Theropithecus gelada (Gelada baboon) protein is Hemoglobin subunit beta (HBB).